Reading from the N-terminus, the 108-residue chain is uncharacterized protein (108 aa).

To H.influenzae HI_0341.

This is an uncharacterized protein from Escherichia coli (strain K12).